Consider the following 511-residue polypeptide: MIVSDDVVFEAKQISKLFPGVKALDGVDLTLRAGRLTTLLGENGAGKSTLMKILAGVQPPDEGELLVQGEPVHFTSPRDAQDHGIAMIHQELSLVPDLTVAENIFLGREPLRFETLIDYTELNRQANEWLKRLELDVSPTTPVRRLRVGQQQLVEIARALAGNVRILIMDEPTSAITERETEVLFRCIADLKKQGVAIVYITHRLEELEQIADDIVVMRDGCLIGTAEFGELSHDAMVRMMVGRDVKILSKQSSSNNQPVLRAEGISLSHPTRPGDYLVHEVDMHVCKGEVLGIFGLMGAGRTELLECLFGLHPTASTGQVSMHDRSVRLRNPADAISHGLALVPEDRKQDGLVLSMSVGENASLASLKHAERFGFIDRGREREHTRRFVERFRVKTPSLREKIINLSGGNQQKVILAKWLATGPAVLMLDEPTRGIDIHAKNEIYSLINELTADGLAVIMVSSELPEVMAVSDRILVMCEGRATQSFDRSEATEENILQAALPRRNSIPC.

2 ABC transporter domains span residues 9–245 and 261–506; these read FEAK…VGRD and LRAE…LPRR. 41-48 is a binding site for ATP; sequence GENGAGKS.

This sequence belongs to the ABC transporter superfamily. Ribose importer (TC 3.A.1.2.1) family. The complex is composed of an ATP-binding protein (RbsA), two transmembrane proteins (RbsC) and a solute-binding protein (RbsB).

The protein localises to the cell inner membrane. The catalysed reaction is D-ribose(out) + ATP + H2O = D-ribose(in) + ADP + phosphate + H(+). Part of the ABC transporter complex RbsABC involved in ribose import. Responsible for energy coupling to the transport system. The sequence is that of Ribose import ATP-binding protein RbsA from Rhodopirellula baltica (strain DSM 10527 / NCIMB 13988 / SH1).